A 61-amino-acid chain; its full sequence is ATP synthase subunit J, mitochondrial (61 aa).

Residues 13–32 (LVKYYWPFFVGFGLTFYGVA) traverse the membrane as a helical segment.

As to quaternary structure, F-type ATP synthases have 2 components, the catalytic core F(1) and the membrane-embedded component F(0), linked together by a central stalk and a peripheral stalk. The central stalk, also called rotor shaft, is often seen as part of F(1). The peripheral stalk is seen as part of F(0). F(0) contains the membrane channel next to the rotor. F-type ATP synthases form dimers but each monomer functions independently in ATP generation. The dimer consists of 18 different polypeptides: ATP1 (subunit alpha, part of F(1), 3 molecules per monomer), ATP2 (subunit beta, part of F(1), 3 molecules per monomer), ATP3 (subunit gamma, part of the central stalk), ATP4 (subunit b, part of the peripheral stalk), ATP5/OSCP (subunit 5/OSCP, part of the peripheral stalk), ATP6 (subunit a, part of the peripheral stalk), ATP7 (subunit d, part of the peripheral stalk), ATP8 (subunit 8, part of the peripheral stalk), OLI1 (subunit c, part of the rotor, 10 molecules per monomer), ATP14 (subunit h, part of the peripheral stalk), ATP15 (subunit epsilon, part of the central stalk), ATP16 (subunit delta, part of the central stalk), ATP17 (subunit f, part of the peripheral stalk), ATP18 (subunit i/j, part of the peripheral stalk). Dimer-specific subunits are ATP19 (subunit k, at interface between monomers), ATP20 (subunit g, at interface between monomers), TIM11 (subunit e, at interface between monomers). Also contains subunit L.

The protein resides in the mitochondrion inner membrane. In terms of biological role, mitochondrial membrane ATP synthase (F(1)F(0) ATP synthase or Complex V) produces ATP from ADP in the presence of a proton gradient across the membrane which is generated by electron transport complexes of the respiratory chain. F-type ATP synthases consist of two structural domains, F(1) - containing the extramembraneous catalytic core, and F(0) - containing the membrane proton channel, linked together by a central stalk and a peripheral stalk. During catalysis, ATP synthesis in the catalytic domain of F(1) is coupled via a rotary mechanism of the central stalk subunits to proton translocation. Part of the complex F(0) domain. Minor subunit located with subunit a/ATP6 in the membrane. The sequence is that of ATP synthase subunit J, mitochondrial from Pichia angusta (Yeast).